The primary structure comprises 325 residues: Probable transcription factor At4g01260 (325 aa).

The segment at 1-98 (MAPKQLKKIE…SMGEEDVKKK (98 aa)) is disordered. Composition is skewed to low complexity over residues 23 to 32 (ASSGESATSG) and 49 to 69 (KPVVVSKPSGSKTTTKPESST). The span at 73–83 (RSFEKTDEMSK) shows a compositional bias: basic and acidic residues.

The protein belongs to the GeBP family.

The sequence is that of Probable transcription factor At4g01260 from Arabidopsis thaliana (Mouse-ear cress).